A 247-amino-acid chain; its full sequence is C-type lectin domain family 7 member A (247 aa).

Topologically, residues 1–44 (MEYHPDLENLDEDGYTQLHFDSQSNTRIAVVSEKGSCAASPPWR) are cytoplasmic. Residues 15-18 (YTQL) carry the ITAM-like motif. The chain crosses the membrane as a helical; Signal-anchor for type II membrane protein span at residues 45–65 (LIAVILGILCLVILVIAVVLG). At 66–247 (TMAIWRSNSG…YSICEKKFSM (182 aa)) the chain is on the extracellular side. N-linked (GlcNAc...) asparagine glycosylation occurs at Asn91. Disulfide bonds link Cys120–Cys131, Cys148–Cys241, and Cys220–Cys233. Positions 127–242 (YEKSCYLFSM…CSVPSYSICE (116 aa)) constitute a C-type lectin domain. 146–153 (RQCWQLGS) is a binding site for (1,3-beta-D-glucosyl)n. 3 residues coordinate a divalent metal cation: Lys157, Asp159, and Glu163. (1,3-beta-D-glucosyl)n is bound at residue Glu195. Position 242 (Glu242) interacts with a divalent metal cation.

As to quaternary structure, homodimer. Interacts with SYK; participates in leukocyte activation in presence of fungal pathogens. Interacts with CD37; this interaction controls CLEC7A-mediated IL-6 production. In terms of assembly, interacts with RANBP9. In terms of processing, phosphorylated on tyrosine residues in response to beta-glucan binding. In terms of tissue distribution, highly expressed in peripheral blood leukocytes and dendritic cells. Detected in spleen, bone marrow, lung, muscle, stomach and placenta.

Its subcellular location is the cell membrane. The protein resides in the cytoplasm. Its function is as follows. Lectin that functions as a pattern recognizing receptor (PRR) specific for beta-1,3-linked and beta-1,6-linked glucans, which constitute cell wall constituents from pathogenic bacteria and fungi. Necessary for the TLR2-mediated inflammatory response and activation of NF-kappa-B: upon beta-glucan binding, recruits SYK via its ITAM motif and promotes a signaling cascade that activates some CARD domain-BCL10-MALT1 (CBM) signalosomes, leading to the activation of NF-kappa-B and MAP kinase p38 (MAPK11, MAPK12, MAPK13 and/or MAPK14) pathways which stimulate expression of genes encoding pro-inflammatory cytokines and chemokines. Enhances cytokine production in macrophages and dendritic cells. Mediates production of reactive oxygen species in the cell. Mediates phagocytosis of C.albicans conidia. Binds T-cells in a way that does not involve their surface glycans and plays a role in T-cell activation. Stimulates T-cell proliferation. Induces phosphorylation of SCIMP after binding beta-glucans. The polypeptide is C-type lectin domain family 7 member A (Homo sapiens (Human)).